The primary structure comprises 550 residues: Probable importin subunit alpha-A (550 aa).

Positions 1–30 (MSSRDKQDSRKKEFKKSLDSETARRKREEN) are enriched in basic and acidic residues. The interval 1-34 (MSSRDKQDSRKKEFKKSLDSETARRKREENSIGI) is disordered. Residues 1 to 56 (MSSRDKQDSRKKEFKKSLDSETARRKREENSIGIRKNAREELMLKRRGIVQPNPST) form the IBB domain. ARM repeat units lie at residues 116-155 (YPPIDQVIECGIIPKLNQLLQCNNPKVQFESAWALTNIAS), 158-198 (NRQT…NIAG), 201-241 (VDSR…KIGL), 256-297 (KPQP…YLCD), 300-339 (NTKIQAVIDSGVVPRLVKLLEYPDSIVFTPALRAVGNIVT), 342-381 (SSQTQIVIDNNGVELITRLLAVQKKSIRKESCWALSNITA), 385-424 (SQIDVVVSNPKTVTTLISLLSHSEHDIKREACWALSNSTN), and 428-467 (TKSIQTLVRHNILKHFIDLLNSQDLVILKIVLEGLINIIK).

It belongs to the importin alpha family. Forms a complex with tnpo/importin subunit beta.

The protein localises to the cytoplasm. The protein resides in the nucleus envelope. Functionally, functions in nuclear protein import via a substrate-importin alpha-beta transport complex that passes though the nuclear pore complexes (NPC). Binds specifically and directly to substrates containing either a simple or bipartite NLS motif. The polypeptide is Probable importin subunit alpha-A (Dictyostelium discoideum (Social amoeba)).